Reading from the N-terminus, the 66-residue chain is Conotoxin TsMEKL-03 (66 aa).

The N-terminal stretch at 1-9 (VILLMSTQA) is a signal peptide. The propeptide occupies 10–38 (LIQSGVEKRSNKIKALSKRKTTAESWWEG). Cystine bridges form between Cys-40–Cys-54, Cys-47–Cys-58, and Cys-53–Cys-63.

The protein belongs to the conotoxin O2 superfamily. In terms of tissue distribution, expressed by the venom duct.

Its subcellular location is the secreted. The polypeptide is Conotoxin TsMEKL-03 (Conus tessulatus (Tessellate cone)).